The chain runs to 889 residues: Translation initiation factor IF-2 (889 aa).

The tract at residues Leu-158–Gln-296 is disordered. The span at Ala-209–Thr-228 shows a compositional bias: low complexity. A compositionally biased stretch (basic and acidic residues) spans Val-238 to Gly-270. The region spanning Pro-391–Lys-560 is the tr-type G domain. The segment at Gly-400 to Thr-407 is G1. Position 400 to 407 (Gly-400 to Thr-407) interacts with GTP. The segment at Gly-425–His-429 is G2. Residues Asp-446–Gly-449 are G3. GTP-binding positions include Asp-446 to His-450 and Asn-500 to Asp-503. A G4 region spans residues Asn-500–Asp-503. The interval Ser-536 to Lys-538 is G5.

The protein belongs to the TRAFAC class translation factor GTPase superfamily. Classic translation factor GTPase family. IF-2 subfamily.

The protein resides in the cytoplasm. In terms of biological role, one of the essential components for the initiation of protein synthesis. Protects formylmethionyl-tRNA from spontaneous hydrolysis and promotes its binding to the 30S ribosomal subunits. Also involved in the hydrolysis of GTP during the formation of the 70S ribosomal complex. This is Translation initiation factor IF-2 from Nitrosomonas europaea (strain ATCC 19718 / CIP 103999 / KCTC 2705 / NBRC 14298).